The following is a 316-amino-acid chain: L-lactate dehydrogenase (316 aa).

NAD(+) is bound by residues Val15, Asp37, Lys42, Tyr68, and 82 to 83 (GL). Residues Gln85, Arg91, and 123 to 126 (NPVD) each bind substrate. NAD(+) contacts are provided by residues 121-123 (ASN) and Thr146. Residue 151 to 154 (DTSR) coordinates substrate. Residues Arg156 and His171 each coordinate beta-D-fructose 1,6-bisphosphate. The active-site Proton acceptor is the His178. The residue at position 222 (Tyr222) is a Phosphotyrosine. Thr231 contributes to the substrate binding site.

The protein belongs to the LDH/MDH superfamily. LDH family. Homotetramer.

It is found in the cytoplasm. The catalysed reaction is (S)-lactate + NAD(+) = pyruvate + NADH + H(+). Its pathway is fermentation; pyruvate fermentation to lactate; (S)-lactate from pyruvate: step 1/1. With respect to regulation, allosterically activated by fructose 1,6-bisphosphate (FBP). Its function is as follows. Catalyzes the conversion of lactate to pyruvate. The sequence is that of L-lactate dehydrogenase from Borrelia hermsii (strain HS1 / DAH).